A 536-amino-acid polypeptide reads, in one-letter code: Phosphoenolpyruvate carboxykinase (ATP) (536 aa).

Substrate contacts are provided by Arg61, Tyr195, and Lys201. ATP is bound by residues Lys201, His220, and 236–244 (GLSGTGKTT). The Mn(2+) site is built by Lys201 and His220. Residue Asp257 participates in Mn(2+) binding. 3 residues coordinate ATP: Glu285, Arg322, and Thr447. Residue Arg322 participates in substrate binding.

It belongs to the phosphoenolpyruvate carboxykinase (ATP) family. Mn(2+) is required as a cofactor.

The protein localises to the cytoplasm. It catalyses the reaction oxaloacetate + ATP = phosphoenolpyruvate + ADP + CO2. The protein operates within carbohydrate biosynthesis; gluconeogenesis. Functionally, involved in the gluconeogenesis. Catalyzes the conversion of oxaloacetate (OAA) to phosphoenolpyruvate (PEP) through direct phosphoryl transfer between the nucleoside triphosphate and OAA. This is Phosphoenolpyruvate carboxykinase (ATP) from Sinorhizobium fredii (strain NBRC 101917 / NGR234).